The following is an 87-amino-acid chain: Small ribosomal subunit protein uS15c (87 aa).

Belongs to the universal ribosomal protein uS15 family. In terms of assembly, part of the 30S ribosomal subunit.

It is found in the plastid. It localises to the chloroplast. This chain is Small ribosomal subunit protein uS15c (rps15), found in Solanum bulbocastanum (Wild potato).